The primary structure comprises 189 residues: Auxin-induced protein IAA4 (189 aa).

The EAR-like (transcriptional repression) signature appears at 8-12 (LRLGL). One can recognise a PB1 domain in the interval 92-179 (GIFVKVSMDG…SCKRLRIMKG (88 aa)).

This sequence belongs to the Aux/IAA family. In terms of assembly, homodimers and heterodimers. Phosphorylated by phytochrome A in vitro.

The protein localises to the nucleus. Aux/IAA proteins are short-lived transcriptional factors that function as repressors of early auxin response genes at low auxin concentrations. Repression is thought to result from the interaction with auxin response factors (ARFs), proteins that bind to the auxin-responsive promoter element (AuxRE). Formation of heterodimers with ARF proteins may alter their ability to modulate early auxin response genes expression. The polypeptide is Auxin-induced protein IAA4 (IAA4/5) (Pisum sativum (Garden pea)).